A 163-amino-acid polypeptide reads, in one-letter code: SsrA-binding protein (163 aa).

Residues 135–156 are compositionally biased toward basic and acidic residues; sequence GKKEHDKRDDTKEREWKIEKSR. Residues 135-163 form a disordered region; that stretch reads GKKEHDKRDDTKEREWKIEKSRTMKHAAR.

It belongs to the SmpB family.

The protein localises to the cytoplasm. Required for rescue of stalled ribosomes mediated by trans-translation. Binds to transfer-messenger RNA (tmRNA), required for stable association of tmRNA with ribosomes. tmRNA and SmpB together mimic tRNA shape, replacing the anticodon stem-loop with SmpB. tmRNA is encoded by the ssrA gene; the 2 termini fold to resemble tRNA(Ala) and it encodes a 'tag peptide', a short internal open reading frame. During trans-translation Ala-aminoacylated tmRNA acts like a tRNA, entering the A-site of stalled ribosomes, displacing the stalled mRNA. The ribosome then switches to translate the ORF on the tmRNA; the nascent peptide is terminated with the 'tag peptide' encoded by the tmRNA and targeted for degradation. The ribosome is freed to recommence translation, which seems to be the essential function of trans-translation. The polypeptide is SsrA-binding protein (Shewanella loihica (strain ATCC BAA-1088 / PV-4)).